Consider the following 361-residue polypeptide: Histidinol-phosphate aminotransferase (361 aa).

Lys-219 is subject to N6-(pyridoxal phosphate)lysine.

Belongs to the class-II pyridoxal-phosphate-dependent aminotransferase family. Histidinol-phosphate aminotransferase subfamily. As to quaternary structure, homodimer. Pyridoxal 5'-phosphate is required as a cofactor.

The enzyme catalyses L-histidinol phosphate + 2-oxoglutarate = 3-(imidazol-4-yl)-2-oxopropyl phosphate + L-glutamate. Its pathway is amino-acid biosynthesis; L-histidine biosynthesis; L-histidine from 5-phospho-alpha-D-ribose 1-diphosphate: step 7/9. In Acinetobacter baylyi (strain ATCC 33305 / BD413 / ADP1), this protein is Histidinol-phosphate aminotransferase.